Reading from the N-terminus, the 142-residue chain is Domesticated amidase effector 2 (142 aa).

Positions 1–35 (MKLFLISAALVVLGLAAVADAIGCSDPSPFQGRWV) are cleaved as a signal peptide. Active-site residues include Cys-43 and His-94.

The protein belongs to the cell wall amidase Dae2/Tae2-like family. In terms of processing, may be post-translationally modified, since the saliva wild-type protein is slightly heavier than the recombinant one. As to expression, detected in salivary glands and in the gut (at protein level).

It is found in the secreted. Tick gut and saliva antibacterial peptide that directly antagonizes host skin commensals which enter the ticks during feeding. Acts as a cell wall hydrolase that cleaves the bond between gamma-D-glutamate-meso-diaminopimelate of a peptide stem and D-alanine of another peptide stem in peptidoglycans. In vitro, degrades peptidoglycans from both Gram-negative and Gram-positive bacteria. Is not able to traverse the protective outer membrane of Gram-negative bacteria. Is not able to kill Borrelia burgdorferi, one of the Lyme disease-causing bacteria. This Ixodes scapularis (Black-legged tick) protein is Domesticated amidase effector 2.